The chain runs to 391 residues: Histidinol-phosphate aminotransferase (391 aa).

Lysine 245 carries the N6-(pyridoxal phosphate)lysine modification.

The protein belongs to the class-II pyridoxal-phosphate-dependent aminotransferase family. Histidinol-phosphate aminotransferase subfamily. Homodimer. Pyridoxal 5'-phosphate is required as a cofactor.

The catalysed reaction is L-histidinol phosphate + 2-oxoglutarate = 3-(imidazol-4-yl)-2-oxopropyl phosphate + L-glutamate. Its pathway is amino-acid biosynthesis; L-histidine biosynthesis; L-histidine from 5-phospho-alpha-D-ribose 1-diphosphate: step 7/9. The protein is Histidinol-phosphate aminotransferase of Bifidobacterium adolescentis (strain ATCC 15703 / DSM 20083 / NCTC 11814 / E194a).